We begin with the raw amino-acid sequence, 198 residues long: Na(+)-translocating NADH-quinone reductase subunit E (198 aa).

The next 6 helical transmembrane spans lie at 11–31 (SVFI…FLAV), 35–55 (VSTA…SVPV), 77–97 (FLNF…LEMI), 110–130 (GIFL…SFMV), 140–160 (IVYG…LAGI), and 176–196 (LGIT…FSGV).

This sequence belongs to the NqrDE/RnfAE family. Composed of six subunits; NqrA, NqrB, NqrC, NqrD, NqrE and NqrF.

The protein resides in the cell inner membrane. The catalysed reaction is a ubiquinone + n Na(+)(in) + NADH + H(+) = a ubiquinol + n Na(+)(out) + NAD(+). In terms of biological role, NQR complex catalyzes the reduction of ubiquinone-1 to ubiquinol by two successive reactions, coupled with the transport of Na(+) ions from the cytoplasm to the periplasm. NqrA to NqrE are probably involved in the second step, the conversion of ubisemiquinone to ubiquinol. The protein is Na(+)-translocating NADH-quinone reductase subunit E of Histophilus somni (strain 2336) (Haemophilus somnus).